The following is a 911-amino-acid chain: Facilitated trehalose transporter Tret1 (911 aa).

Residues 1-256 form a disordered region; that stretch reads MSGRDNRGAG…RIGFQQQKAT (256 aa). Residues 1–446 lie on the Cytoplasmic side of the membrane; it reads MSGRDNRGAG…VYRPTTNPIY (446 aa). The segment covering 8-19 has biased composition (gly residues); it reads GAGGGGGGGGGG. A compositionally biased stretch (basic and acidic residues) spans 32–50; sequence KLKEKLTRAGEELGYHRVE. Composition is skewed to low complexity over residues 51–64, 76–129, and 156–166; these read SNLSTSNTGTSLDT, AAPQ…QQLR, and QQIHVQQQQQQ. 3 positions are modified to phosphoserine: Ser302, Ser303, and Ser304. Residues 334–355 are disordered; that stretch reads VLQGSSTDSDEEGDDAEHKRLI. Phosphoserine occurs at positions 374 and 376. The disordered stretch occupies residues 380–402; that stretch reads FLTSRQNFQQQRSISTDSRKSRR. A compositionally biased stretch (polar residues) spans 384–395; sequence RQNFQQQRSIST. Residues 447 to 467 form a helical membrane-spanning segment; the sequence is IWTQVLAALSVSLGSLVVGFA. Topologically, residues 468–494 are extracellular; it reads SAYTSPALVSMTNTNLTSFVVTPQAAS. The N-linked (GlcNAc...) asparagine glycan is linked to Asn482. Residues 495–515 traverse the membrane as a helical segment; the sequence is WVGGIMPLAGLAGGIAGGPFI. Residues 516-527 are Cytoplasmic-facing; that stretch reads EYLGRRNTILAT. A helical transmembrane segment spans residues 528–548; that stretch reads AVPFIVSWLLIACAVNVIMVL. Over 549–551 the chain is Extracellular; the sequence is CGR. A helical transmembrane segment spans residues 552–572; the sequence is FLAGFCVGIASLSLPVYLGET. Over 573–578 the chain is Cytoplasmic; it reads VQPEVR. Residues 579–599 form a helical membrane-spanning segment; it reads GTLGLLPTAFGNIGILLCFVA. Residues 600–606 are Extracellular-facing; that stretch reads GTYMDWS. Residues 607 to 627 traverse the membrane as a helical segment; sequence MLAFLGASLPVPFLILMFLIP. Residues 628–690 are Cytoplasmic-facing; it reads ETPRWYVSRG…ELLKRSNLKP (63 aa). A helical membrane pass occupies residues 691-711; the sequence is LSISLGLMFFQQLSGINAVIF. At 712-727 the chain is on the extracellular side; it reads YTVQIFQDAGSTIDGN. The helical transmembrane segment at 728–748 threads the bilayer; it reads VCTIIVGVVNFAATFIATILI. Topologically, residues 749–754 are cytoplasmic; the sequence is DRAGRK. The chain crosses the membrane as a helical span at residues 755-775; it reads VLLYVSNVMMVLTLFVLGGFF. At 776–794 the chain is on the extracellular side; that stretch reads YCKSSGMDTSNVGWLPLSC. The chain crosses the membrane as a helical span at residues 795–815; sequence FVIYILGFSLGFGPIPWLMMG. Residues 816-821 are Cytoplasmic-facing; that stretch reads EILPAK. A helical membrane pass occupies residues 822-842; that stretch reads IRGSAASVATAFNWSCTFVVT. Topologically, residues 843-855 are extracellular; that stretch reads KSFQDMIDFMGAH. A helical membrane pass occupies residues 856 to 876; sequence GAFWMFGAICFIGLFFVIFYV. At 877–911 the chain is on the cytoplasmic side; that stretch reads PETQGKTLEDIERKMMGRVRRMSSVANIKPLSFNM. A phosphoserine mark is found at Ser899 and Ser900.

Belongs to the major facilitator superfamily. Sugar transporter (TC 2.A.1.1) family. Trehalose transporter subfamily.

It is found in the cell membrane. Its function is as follows. Low-capacity facilitative transporter for trehalose. Does not transport maltose, sucrose or lactose. Mediates the bidirectional transfer of trehalose. Responsible for the transport of trehalose synthesized in the fat body and the incorporation of trehalose into other tissues that require a carbon source, thereby regulating trehalose levels in the hemolymph. The polypeptide is Facilitated trehalose transporter Tret1 (Drosophila virilis (Fruit fly)).